We begin with the raw amino-acid sequence, 214 residues long: Ribonuclease HII (214 aa).

Residues 26–214 enclose the RNase H type-2 domain; sequence EIVCGVDEAG…PVRAALDLIR (189 aa). A divalent metal cation-binding residues include D32, E33, and D124.

Belongs to the RNase HII family. It depends on Mn(2+) as a cofactor. Mg(2+) serves as cofactor.

It is found in the cytoplasm. The catalysed reaction is Endonucleolytic cleavage to 5'-phosphomonoester.. Its function is as follows. Endonuclease that specifically degrades the RNA of RNA-DNA hybrids. The chain is Ribonuclease HII from Burkholderia lata (strain ATCC 17760 / DSM 23089 / LMG 22485 / NCIMB 9086 / R18194 / 383).